The chain runs to 237 residues: tRNA (guanine-N(1)-)-methyltransferase (237 aa).

Residues Gly-113 and 133-138 (VGDFIV) contribute to the S-adenosyl-L-methionine site.

This sequence belongs to the RNA methyltransferase TrmD family. Homodimer.

The protein localises to the cytoplasm. The enzyme catalyses guanosine(37) in tRNA + S-adenosyl-L-methionine = N(1)-methylguanosine(37) in tRNA + S-adenosyl-L-homocysteine + H(+). Specifically methylates guanosine-37 in various tRNAs. This chain is tRNA (guanine-N(1)-)-methyltransferase, found in Hydrogenovibrio crunogenus (strain DSM 25203 / XCL-2) (Thiomicrospira crunogena).